The sequence spans 72 residues: Probable neurotoxin pcD-993 (72 aa).

An N-terminal signal peptide occupies residues 1–19 (MNYLVMISFALLLVIGVES). Residues 21-72 (RDGYFVEPDNCVVHCMPSSEMCDRGCKHNGATSGSCKAFSKGGNACWCKGLR) enclose the LCN-type CS-alpha/beta domain. Cystine bridges form between Cys-35–Cys-56, Cys-42–Cys-66, and Cys-46–Cys-68. Arg-72 is a propeptide (removed by a carboxypeptidase).

Belongs to the long (3 C-C) scorpion toxin superfamily. In terms of tissue distribution, expressed by the venom gland.

It localises to the secreted. The chain is Probable neurotoxin pcD-993 from Androctonus australis (Sahara scorpion).